The following is a 126-amino-acid chain: Large-conductance mechanosensitive channel (126 aa).

2 consecutive transmembrane segments (helical) span residues 17-37 and 70-90; these read VDLAVGVIIGAAFGKIVSSFI and GLFLSAVINFIIVAFVLFLII.

Belongs to the MscL family. In terms of assembly, homopentamer.

The protein resides in the cell inner membrane. Its function is as follows. Channel that opens in response to stretch forces in the membrane lipid bilayer. May participate in the regulation of osmotic pressure changes within the cell. This Flavobacterium johnsoniae (strain ATCC 17061 / DSM 2064 / JCM 8514 / BCRC 14874 / CCUG 350202 / NBRC 14942 / NCIMB 11054 / UW101) (Cytophaga johnsonae) protein is Large-conductance mechanosensitive channel.